Reading from the N-terminus, the 70-residue chain is DNA-directed RNA polymerase subunit omega (70 aa).

This sequence belongs to the RNA polymerase subunit omega family. As to quaternary structure, the RNAP catalytic core consists of 2 alpha, 1 beta, 1 beta' and 1 omega subunit. When a sigma factor is associated with the core the holoenzyme is formed, which can initiate transcription.

It catalyses the reaction RNA(n) + a ribonucleoside 5'-triphosphate = RNA(n+1) + diphosphate. Its function is as follows. Promotes RNA polymerase assembly. Latches the N- and C-terminal regions of the beta' subunit thereby facilitating its interaction with the beta and alpha subunits. The chain is DNA-directed RNA polymerase subunit omega from Pelobacter propionicus (strain DSM 2379 / NBRC 103807 / OttBd1).